The sequence spans 327 residues: MTFYYIRILRLQEKLEESFKYALRVVFTITSDLGEVSYPQDATVRVEALDRQQSHSRITISKQCVSWIGNGHAAETTLYFPASHQQIQLTLHLENQNSIVDSIHINADTVLPVWSEAFSPKSTLPNMVWRYIQGPEKKSPNDGLWFLEQMGNSIAKHLWDAGVVFSKKILSDDWHYSFSNRKDINVLELGSGCGIVGISIASKYPRALVSMTDTEDAIEFMEKNVEKNKSAMSNNITSDILVWGHDIPRKFRRHWDYIVMSDVMYNESSFSDLEASLQELMDKNTKLYIAYKKRHDNEKTFMSNILGWLDLVYEERGPITIYILQKK.

Belongs to the UPF0665 family.

The protein resides in the cytoplasm. It localises to the nucleus. In Schizosaccharomyces pombe (strain 972 / ATCC 24843) (Fission yeast), this protein is UPF0665 family protein C23C4.06c.